Reading from the N-terminus, the 370-residue chain is MPHQQILMLFGLLPVATNISTWWNFGSMLLACSTLQVMTGFFLAVHYTANINMAFSSIVHIIRDVPYGWLMQNLHAIGASMFFICIYIHIARGLYYGSYLNKETWLSGTTLLIMLMATAFFGYVLPWGQMSFWAATVITNLLTAIPYLGSTMTTWLWGGFAINDPTLTRFFALHFILPFGIISLSSLHIMLLHEDGSSNPLGTNSDIDKIPFHPYQTYKDLLMLTMMTTLLLMIVSFFPDIFNDPDNFSKANPLVTPQHIKPEWYFLFAYGILRSIPNKLGGALALTMSIMILLTVPFTHTSKLRSMMFRPFMQLMFWTFAATFLVITWTATKPVEPPFTTISQVAALMYFMFFISNPIMGWMENKIMKT.

Helical transmembrane passes span 25–45, 69–90, 105–125, and 170–190; these read FGSM…FLAV, WLMQ…YIHI, WLSG…GYVL, and FFAL…LHIM. The heme b site is built by His-75 and His-89. Positions 174 and 188 each coordinate heme b. An a ubiquinone-binding site is contributed by His-193. The next 4 helical transmembrane spans lie at 218-238, 280-300, 312-332, and 339-358; these read YKDL…VSFF, LGGA…PFTH, FMQL…WTAT, and FTTI…ISNP.

The protein belongs to the cytochrome b family. In terms of assembly, the cytochrome bc1 complex contains 3 respiratory subunits (MT-CYB, CYC1 and UQCRFS1), 2 core proteins (UQCRC1 and UQCRC2) and probably 6 low-molecular weight proteins. The cofactor is heme b.

It is found in the mitochondrion inner membrane. Component of the ubiquinol-cytochrome c reductase complex (complex III or cytochrome b-c1 complex) that is part of the mitochondrial respiratory chain. The b-c1 complex mediates electron transfer from ubiquinol to cytochrome c. Contributes to the generation of a proton gradient across the mitochondrial membrane that is then used for ATP synthesis. In Chilabothrus fordii (Ford's boa), this protein is Cytochrome b (MT-CYB).